A 325-amino-acid polypeptide reads, in one-letter code: Tagatose 1,6-diphosphate aldolase 1 (325 aa).

Belongs to the aldolase LacD family.

It catalyses the reaction D-tagatofuranose 1,6-bisphosphate = D-glyceraldehyde 3-phosphate + dihydroxyacetone phosphate. Its pathway is carbohydrate metabolism; D-tagatose 6-phosphate degradation; D-glyceraldehyde 3-phosphate and glycerone phosphate from D-tagatose 6-phosphate: step 2/2. In Streptococcus agalactiae serotype III (strain NEM316), this protein is Tagatose 1,6-diphosphate aldolase 1.